The sequence spans 260 residues: Acetyl-coenzyme A carboxylase carboxyl transferase subunit alpha (260 aa).

Residues M1 to K235 form the CoA carboxyltransferase C-terminal domain.

The protein belongs to the AccA family. In terms of assembly, acetyl-CoA carboxylase is a heterohexamer composed of biotin carboxyl carrier protein (AccB), biotin carboxylase (AccC) and two subunits each of ACCase subunit alpha (AccA) and ACCase subunit beta (AccD).

Its subcellular location is the cytoplasm. The catalysed reaction is N(6)-carboxybiotinyl-L-lysyl-[protein] + acetyl-CoA = N(6)-biotinyl-L-lysyl-[protein] + malonyl-CoA. It participates in lipid metabolism; malonyl-CoA biosynthesis; malonyl-CoA from acetyl-CoA: step 1/1. Functionally, component of the acetyl coenzyme A carboxylase (ACC) complex. First, biotin carboxylase catalyzes the carboxylation of biotin on its carrier protein (BCCP) and then the CO(2) group is transferred by the carboxyltransferase to acetyl-CoA to form malonyl-CoA. The protein is Acetyl-coenzyme A carboxylase carboxyl transferase subunit alpha of Ruminiclostridium cellulolyticum (strain ATCC 35319 / DSM 5812 / JCM 6584 / H10) (Clostridium cellulolyticum).